A 1767-amino-acid polypeptide reads, in one-letter code: Endo-alpha-N-acetylgalactosaminidase (1767 aa).

An N-terminal signal peptide occupies residues 1-39; it reads MNKGLFEKRCKYSIRKFSLGVASVMIGAAFFGTSPVLAD. 2 stretches are compositionally biased toward basic and acidic residues: residues 61–75 and 84–111; these read KENDGRDFEAPKVGE and DGPKTEEELLALEKEKPAEEKPKEDKPA. Disordered stretches follow at residues 61–124 and 301–324; these read KEND…VTPE and VKTDNQEGVKTEDTPAEKETGPEV. Residues 112–124 show a composition bias toward low complexity; sequence AAKPETPKTVTPE. The span at 304 to 324 shows a compositional bias: basic and acidic residues; sequence DNQEGVKTEDTPAEKETGPEV. Positions 577, 579, 581, 583, and 588 each coordinate Ca(2+). The segment at 602 to 893 is catalytic; sequence GWEKVKDITA…DVMTKYFQHF (292 aa). Asp658 is a binding site for substrate. Asp764 acts as the Nucleophile in catalysis. Glu796 functions as the Proton donor/acceptor in the catalytic mechanism. 5 residues coordinate Ca(2+): Asp1233, Glu1235, Glu1281, Trp1284, and Asp1411. The segment at 1711 to 1730 is disordered; sequence LASEQGKTPDYKQEIARPET. The span at 1717 to 1730 shows a compositional bias: basic and acidic residues; the sequence is KTPDYKQEIARPET. The short motif at 1735 to 1739 is the LPXTG sorting signal element; the sequence is LPATG. Thr1738 is modified (pentaglycyl murein peptidoglycan amidated threonine). Residues 1739–1767 constitute a propeptide, removed by sortase; sequence GESQSDTALILASVSLALSALFVVKTKKD.

It belongs to the glycosyl hydrolase 101 family. A subfamily.

It is found in the secreted. The protein localises to the cell wall. It catalyses the reaction a 3-O-[beta-D-galactosyl-(1-&gt;3)-N-acetyl-alpha-D-galactosaminyl]-L-threonyl-[protein] + H2O = beta-D-galactosyl-(1-&gt;3)-N-acetyl-D-galactosamine + L-threonyl-[protein]. The enzyme catalyses a 3-O-[beta-D-galactosyl-(1-&gt;3)-N-acetyl-alpha-D-galactosaminyl]-L-seryl-[protein] + H2O = beta-D-galactosyl-(1-&gt;3)-N-acetyl-D-galactosamine + L-seryl-[protein]. Functionally, involved in the breakdown of mucin-type O-linked glycans. Specifically removes the T-antigen disaccharide (Gal-beta-1,3-GalNAc-alpha) from extracellular host glycoproteins. Representative of a broadly important class of virulence factors. In Streptococcus pneumoniae serotype 4 (strain ATCC BAA-334 / TIGR4), this protein is Endo-alpha-N-acetylgalactosaminidase.